The primary structure comprises 203 residues: Urease accessory protein UreG (203 aa).

Residue 14–21 coordinates GTP; sequence GPVGSGKT.

Belongs to the SIMIBI class G3E GTPase family. UreG subfamily. In terms of assembly, homodimer. UreD, UreF and UreG form a complex that acts as a GTP-hydrolysis-dependent molecular chaperone, activating the urease apoprotein by helping to assemble the nickel containing metallocenter of UreC. The UreE protein probably delivers the nickel.

The protein resides in the cytoplasm. Functionally, facilitates the functional incorporation of the urease nickel metallocenter. This process requires GTP hydrolysis, probably effectuated by UreG. The protein is Urease accessory protein UreG of Rhizobium leguminosarum bv. viciae.